The chain runs to 122 residues: Large ribosomal subunit protein uL14 (122 aa).

Belongs to the universal ribosomal protein uL14 family. As to quaternary structure, part of the 50S ribosomal subunit. Forms a cluster with proteins L3 and L19. In the 70S ribosome, L14 and L19 interact and together make contacts with the 16S rRNA in bridges B5 and B8.

Functionally, binds to 23S rRNA. Forms part of two intersubunit bridges in the 70S ribosome. In Azorhizobium caulinodans (strain ATCC 43989 / DSM 5975 / JCM 20966 / LMG 6465 / NBRC 14845 / NCIMB 13405 / ORS 571), this protein is Large ribosomal subunit protein uL14.